A 118-amino-acid polypeptide reads, in one-letter code: MLTCEMRESALARLGRALADPTRCRILVALLDGVCYPGQLAAHLGLTRSNVSNHLSCLRGCGLVVATYEGRQVRYALADSHLARALGELVQVVLAVDTDQPCVAERAASGEAVEMTGS.

Residues 3–97 enclose the HTH arsR-type domain; the sequence is TCEMRESALA…ELVQVVLAVD (95 aa). Positions 57, 61, and 102 each coordinate Cd(2+).

In terms of assembly, homodimer.

Its function is as follows. Metal-responsive transcriptional repressor for the cmt operon. Binding of cadmium or lead causes the repressor to dissociate from the DNA. This is HTH-type transcriptional regulator CmtR (cmtR) from Mycobacterium bovis (strain ATCC BAA-935 / AF2122/97).